Consider the following 216-residue polypeptide: 3-isopropylmalate dehydratase small subunit (216 aa).

It belongs to the LeuD family. LeuD type 1 subfamily. In terms of assembly, heterodimer of LeuC and LeuD.

The enzyme catalyses (2R,3S)-3-isopropylmalate = (2S)-2-isopropylmalate. It functions in the pathway amino-acid biosynthesis; L-leucine biosynthesis; L-leucine from 3-methyl-2-oxobutanoate: step 2/4. Functionally, catalyzes the isomerization between 2-isopropylmalate and 3-isopropylmalate, via the formation of 2-isopropylmaleate. In Albidiferax ferrireducens (strain ATCC BAA-621 / DSM 15236 / T118) (Rhodoferax ferrireducens), this protein is 3-isopropylmalate dehydratase small subunit.